A 351-amino-acid chain; its full sequence is Probable dual-specificity RNA methyltransferase RlmN (351 aa).

The active-site Proton acceptor is glutamate 97. A Radical SAM core domain is found at tyrosine 103–aspartate 337. A disulfide bridge connects residues cysteine 110 and cysteine 342. [4Fe-4S] cluster is bound by residues cysteine 117, cysteine 121, and cysteine 124. Residues glycine 166 to glutamate 167, serine 198, serine 221 to histidine 223, and asparagine 299 contribute to the S-adenosyl-L-methionine site. Cysteine 342 functions as the S-methylcysteine intermediate in the catalytic mechanism.

Belongs to the radical SAM superfamily. RlmN family. [4Fe-4S] cluster serves as cofactor.

It is found in the cytoplasm. It catalyses the reaction adenosine(2503) in 23S rRNA + 2 reduced [2Fe-2S]-[ferredoxin] + 2 S-adenosyl-L-methionine = 2-methyladenosine(2503) in 23S rRNA + 5'-deoxyadenosine + L-methionine + 2 oxidized [2Fe-2S]-[ferredoxin] + S-adenosyl-L-homocysteine. The catalysed reaction is adenosine(37) in tRNA + 2 reduced [2Fe-2S]-[ferredoxin] + 2 S-adenosyl-L-methionine = 2-methyladenosine(37) in tRNA + 5'-deoxyadenosine + L-methionine + 2 oxidized [2Fe-2S]-[ferredoxin] + S-adenosyl-L-homocysteine. Its function is as follows. Specifically methylates position 2 of adenine 2503 in 23S rRNA and position 2 of adenine 37 in tRNAs. This Natranaerobius thermophilus (strain ATCC BAA-1301 / DSM 18059 / JW/NM-WN-LF) protein is Probable dual-specificity RNA methyltransferase RlmN.